Here is a 430-residue protein sequence, read N- to C-terminus: UDP-N-acetylglucosamine 1-carboxyvinyltransferase (430 aa).

22–23 (KN) lines the phosphoenolpyruvate pocket. Arginine 102 is a UDP-N-acetyl-alpha-D-glucosamine binding site. The active-site Proton donor is the cysteine 126. A 2-(S-cysteinyl)pyruvic acid O-phosphothioketal modification is found at cysteine 126. UDP-N-acetyl-alpha-D-glucosamine contacts are provided by residues 131–135 (RPVDL), 172–175 (KVSV), aspartate 317, and isoleucine 339.

It belongs to the EPSP synthase family. MurA subfamily.

It localises to the cytoplasm. It carries out the reaction phosphoenolpyruvate + UDP-N-acetyl-alpha-D-glucosamine = UDP-N-acetyl-3-O-(1-carboxyvinyl)-alpha-D-glucosamine + phosphate. It participates in cell wall biogenesis; peptidoglycan biosynthesis. Cell wall formation. Adds enolpyruvyl to UDP-N-acetylglucosamine. This is UDP-N-acetylglucosamine 1-carboxyvinyltransferase from Rhizobium etli (strain CIAT 652).